The primary structure comprises 554 residues: MLO-like protein 14 (554 aa).

Residues 1–13 (MREETEPSERTLG) are Extracellular-facing. The chain crosses the membrane as a helical span at residues 14-34 (LTPTWSVATVLTIFVFVSLIV). The Cytoplasmic portion of the chain corresponds to 35–63 (ERSIHRLSNWLQKTKRKPLFAALEKMKEE). Residues 64-84 (LMLLGFISLLLTATSSTIANI) traverse the membrane as a helical segment. At 85 to 158 (CVSSSFHNDR…SYEGMEQLHR (74 aa)) the chain is on the extracellular side. A helical transmembrane segment spans residues 159–179 (FIFIMAVTHVTYSCLTMLLAI). Residues 180 to 281 (VKIHRWRIWE…MIRSMEEEFQ (102 aa)) are Cytoplasmic-facing. A helical transmembrane segment spans residues 282-302 (KIVGVSGPLWGFVVGFMLFNI). Lys303 is a topological domain (extracellular). A helical membrane pass occupies residues 304–324 (GSNLYFWLAIIPITLVLLVGA). Over 325-366 (KLQHVIATLALENASITEYASGIKLRPRDELFWFKKPELLLS) the chain is Cytoplasmic. A helical transmembrane segment spans residues 367–387 (LIHFIQFQNAFELASFFWFWW). At 388-406 (QFGYNSCFLRNHLLVYLRL) the chain is on the extracellular side. Residues 407–427 (ILGFSGQFLCSYSTLPLYALV) traverse the membrane as a helical segment. The Cytoplasmic segment spans residues 428–554 (TQMGTNYKAA…SSSLPMRREC (127 aa)). The interval 441-462 (QRVRETINGWGKATRRKRRHGL) is calmodulin-binding.

This sequence belongs to the MLO family.

Its subcellular location is the membrane. Functionally, may be involved in modulation of pathogen defense and leaf cell death. Activity seems to be regulated by Ca(2+)-dependent calmodulin binding and seems not to require heterotrimeric G proteins. The sequence is that of MLO-like protein 14 (MLO14) from Arabidopsis thaliana (Mouse-ear cress).